The chain runs to 260 residues: Dynein regulatory complex subunit 6 (260 aa).

Over residues 1–13 the composition is skewed to basic residues; sequence MAPKKKGGGKKKK. Residues 1–43 form a disordered region; the sequence is MAPKKKGGGKKKKKDDGAEPPHDGSWERAVESGTWEKPVTDLP. Positions 14–30 are enriched in basic and acidic residues; it reads KDDGAEPPHDGSWERAV.

This sequence belongs to the DRC6 family. As to quaternary structure, component of the nexin-dynein regulatory complex (N-DRC).

It is found in the cytoplasm. Its subcellular location is the cytoskeleton. It localises to the flagellum axoneme. Component of the nexin-dynein regulatory complex (N-DRC), a key regulator of ciliary/flagellar motility which maintains the alignment and integrity of the distal axoneme and regulates microtubule sliding in motile axonemes. This is Dynein regulatory complex subunit 6 from Chlamydomonas reinhardtii (Chlamydomonas smithii).